We begin with the raw amino-acid sequence, 420 residues long: Serine hydroxymethyltransferase (420 aa).

Residues Leu118 and 122-124 (GHL) contribute to the (6S)-5,6,7,8-tetrahydrofolate site. An N6-(pyridoxal phosphate)lysine modification is found at Lys227.

The protein belongs to the SHMT family. As to quaternary structure, homodimer. Requires pyridoxal 5'-phosphate as cofactor.

The protein localises to the cytoplasm. The catalysed reaction is (6R)-5,10-methylene-5,6,7,8-tetrahydrofolate + glycine + H2O = (6S)-5,6,7,8-tetrahydrofolate + L-serine. The protein operates within one-carbon metabolism; tetrahydrofolate interconversion. It functions in the pathway amino-acid biosynthesis; glycine biosynthesis; glycine from L-serine: step 1/1. In terms of biological role, catalyzes the reversible interconversion of serine and glycine with tetrahydrofolate (THF) serving as the one-carbon carrier. This reaction serves as the major source of one-carbon groups required for the biosynthesis of purines, thymidylate, methionine, and other important biomolecules. Also exhibits THF-independent aldolase activity toward beta-hydroxyamino acids, producing glycine and aldehydes, via a retro-aldol mechanism. The sequence is that of Serine hydroxymethyltransferase from Persephonella marina (strain DSM 14350 / EX-H1).